Here is a 269-residue protein sequence, read N- to C-terminus: NAD kinase (269 aa).

Catalysis depends on aspartate 45, which acts as the Proton acceptor. NAD(+) contacts are provided by residues 45-46 (DG), 122-123 (NE), arginine 149, aspartate 151, and alanine 186.

It belongs to the NAD kinase family. A divalent metal cation serves as cofactor.

The protein resides in the cytoplasm. It catalyses the reaction NAD(+) + ATP = ADP + NADP(+) + H(+). Its function is as follows. Involved in the regulation of the intracellular balance of NAD and NADP, and is a key enzyme in the biosynthesis of NADP. Catalyzes specifically the phosphorylation on 2'-hydroxyl of the adenosine moiety of NAD to yield NADP. This is NAD kinase from Staphylococcus aureus (strain Mu3 / ATCC 700698).